Here is a 370-residue protein sequence, read N- to C-terminus: Anthranilate phosphoribosyltransferase (370 aa).

5-phospho-alpha-D-ribose 1-diphosphate contacts are provided by residues glycine 82, 85–86, threonine 90, 92–95, 110–118, and serine 122; these read GD, NVST, and KHGNRAATS. Position 82 (glycine 82) interacts with anthranilate. Serine 94 lines the Mg(2+) pocket. Asparagine 113 is an anthranilate binding site. Arginine 168 is an anthranilate binding site. Residues aspartate 226 and glutamate 227 each contribute to the Mg(2+) site.

It belongs to the anthranilate phosphoribosyltransferase family. As to quaternary structure, homodimer. It depends on Mg(2+) as a cofactor.

It catalyses the reaction N-(5-phospho-beta-D-ribosyl)anthranilate + diphosphate = 5-phospho-alpha-D-ribose 1-diphosphate + anthranilate. It functions in the pathway amino-acid biosynthesis; L-tryptophan biosynthesis; L-tryptophan from chorismate: step 2/5. Its function is as follows. Catalyzes the transfer of the phosphoribosyl group of 5-phosphorylribose-1-pyrophosphate (PRPP) to anthranilate to yield N-(5'-phosphoribosyl)-anthranilate (PRA). The chain is Anthranilate phosphoribosyltransferase from Methanosarcina acetivorans (strain ATCC 35395 / DSM 2834 / JCM 12185 / C2A).